We begin with the raw amino-acid sequence, 187 residues long: Protein P18, mitochondrial (187 aa).

A mitochondrion-targeting transit peptide spans 1 to 17 (MRRLSSQLMCTAAAVRF). Residues 160-187 (NAAKAKADGKEHPSTLAQQQSLFDIKIQ) are disordered.

The protein resides in the mitochondrion inner membrane. In terms of biological role, putative RNA-binding protein. This chain is Protein P18, mitochondrial, found in Leishmania tarentolae (Sauroleishmania tarentolae).